The primary structure comprises 426 residues: Dihydroorotase (426 aa).

His58 and His60 together coordinate Zn(2+). Residues 60-62 (HLR) and Asn92 each bind substrate. Zn(2+)-binding residues include Asp150, His177, and His230. Asn276 is a substrate binding site. Asp303 lines the Zn(2+) pocket. Asp303 is an active-site residue. Substrate-binding positions include His307 and 321–322 (FG).

Belongs to the metallo-dependent hydrolases superfamily. DHOase family. Class I DHOase subfamily. Zn(2+) serves as cofactor.

It carries out the reaction (S)-dihydroorotate + H2O = N-carbamoyl-L-aspartate + H(+). It functions in the pathway pyrimidine metabolism; UMP biosynthesis via de novo pathway; (S)-dihydroorotate from bicarbonate: step 3/3. Its function is as follows. Catalyzes the reversible cyclization of carbamoyl aspartate to dihydroorotate. This chain is Dihydroorotase, found in Listeria monocytogenes serotype 4b (strain CLIP80459).